Here is a 144-residue protein sequence, read N- to C-terminus: 3-hydroxyacyl-[acyl-carrier-protein] dehydratase FabZ (144 aa).

His49 is an active-site residue.

It belongs to the thioester dehydratase family. FabZ subfamily.

The protein resides in the cytoplasm. It carries out the reaction a (3R)-hydroxyacyl-[ACP] = a (2E)-enoyl-[ACP] + H2O. In terms of biological role, involved in unsaturated fatty acids biosynthesis. Catalyzes the dehydration of short chain beta-hydroxyacyl-ACPs and long chain saturated and unsaturated beta-hydroxyacyl-ACPs. This chain is 3-hydroxyacyl-[acyl-carrier-protein] dehydratase FabZ, found in Clostridium kluyveri (strain NBRC 12016).